The sequence spans 308 residues: Olfactory receptor 5H19 (308 aa).

Over 1–27 (MEKNATLLTEFVLTGLSHQPLWNIPLF) the chain is Extracellular. Asn-4 carries an N-linked (GlcNAc...) asparagine glycan. Residues 28–48 (LVFLVIYLITIVGNVSLITLI) traverse the membrane as a helical segment. Topologically, residues 49 to 55 (WTDPHLH) are cytoplasmic. The chain crosses the membrane as a helical span at residues 56–76 (IPMYLFLGSLAFVDTSISSIV). Over 77–92 (VPKMLLNFFGKSKVIT) the chain is Extracellular. Residues 93-113 (LSECMAQFFLFNISATTECFL) traverse the membrane as a helical segment. Cys-96 and Cys-188 form a disulfide bridge. At 114-143 (LAAMAYDRYVAICKPLLYPVVMTNGLCVWL) the chain is on the cytoplasmic side. The chain crosses the membrane as a helical span at residues 144–164 (IALSFVAGIIHALIHEGFLLR). Residues 165-197 (LTFCNSNMIHNFYCDIISLLKISCTDTSLNYLI) lie on the Extracellular side of the membrane. Residues 198–218 (VFIFSGSIQVFTISTILVSYT) form a helical membrane-spanning segment. Residues 219–238 (IILFTILKKKSAKGIKKAFS) are Cytoplasmic-facing. Residues 239–259 (TCGAHLLSVSLYYGPLLFMYV) traverse the membrane as a helical segment. Residues 260–270 (HPASSEVDDQD) lie on the Extracellular side of the membrane. A helical membrane pass occupies residues 271-291 (MIDSLFYTVIIPVLNPIIYSL). Over 292–308 (RNKQVIDSLAKFLKRNV) the chain is Cytoplasmic.

This sequence belongs to the G-protein coupled receptor 1 family.

Its subcellular location is the cell membrane. Functionally, potential odorant receptor. The protein is Olfactory receptor 5H19 of Mus musculus (Mouse).